We begin with the raw amino-acid sequence, 221 residues long: C-8 sterol isomerase (221 aa).

The helical transmembrane segment at 5-25 (ISGFLRFVAVLLAVVSPLVYL) threads the bilayer.

It belongs to the ERG2 family.

It localises to the endoplasmic reticulum membrane. Its pathway is steroid metabolism; ergosterol biosynthesis; ergosterol from zymosterol: step 2/5. Catalyzes the reaction which results in unsaturation at C-7 in the B ring of sterols. The sequence is that of C-8 sterol isomerase (ERG2) from Pyricularia oryzae (strain 70-15 / ATCC MYA-4617 / FGSC 8958) (Rice blast fungus).